The chain runs to 517 residues: Crotonobetaine/carnitine--CoA ligase (517 aa).

This sequence belongs to the ATP-dependent AMP-binding enzyme family.

It catalyses the reaction 4-(trimethylamino)butanoate + ATP + CoA = 4-(trimethylamino)butanoyl-CoA + AMP + diphosphate. It carries out the reaction crotonobetaine + ATP + CoA = crotonobetainyl-CoA + AMP + diphosphate. The enzyme catalyses (R)-carnitine + ATP + CoA = (R)-carnitinyl-CoA + AMP + diphosphate. Its pathway is amine and polyamine metabolism; carnitine metabolism. Its function is as follows. Catalyzes the transfer of CoA to carnitine, generating the initial carnitinyl-CoA needed for the CaiB reaction cycle. Also has activity toward crotonobetaine and gamma-butyrobetaine. This chain is Crotonobetaine/carnitine--CoA ligase, found in Escherichia coli O7:K1 (strain IAI39 / ExPEC).